The primary structure comprises 264 residues: 3-methyl-2-oxobutanoate hydroxymethyltransferase (264 aa).

Residues Asp45 and Asp84 each coordinate Mg(2+). 3-methyl-2-oxobutanoate is bound by residues 45–46, Asp84, and Lys112; that span reads DS. Residue Glu114 participates in Mg(2+) binding. Glu181 functions as the Proton acceptor in the catalytic mechanism.

It belongs to the PanB family. As to quaternary structure, homodecamer; pentamer of dimers. Mg(2+) is required as a cofactor.

The protein localises to the cytoplasm. It catalyses the reaction 3-methyl-2-oxobutanoate + (6R)-5,10-methylene-5,6,7,8-tetrahydrofolate + H2O = 2-dehydropantoate + (6S)-5,6,7,8-tetrahydrofolate. The protein operates within cofactor biosynthesis; (R)-pantothenate biosynthesis; (R)-pantoate from 3-methyl-2-oxobutanoate: step 1/2. Catalyzes the reversible reaction in which hydroxymethyl group from 5,10-methylenetetrahydrofolate is transferred onto alpha-ketoisovalerate to form ketopantoate. The sequence is that of 3-methyl-2-oxobutanoate hydroxymethyltransferase from Escherichia coli (strain K12 / MC4100 / BW2952).